An 864-amino-acid polypeptide reads, in one-letter code: 3-O-alpha-D-mannopyranosyl-alpha-D-mannopyranose xylosylphosphotransferase (864 aa).

Residues 1–66 (MPSTALSPPS…VPPRSPSRKI (66 aa)) form a disordered region. Over 1–82 (MPSTALSPPS…HIRPHITPRT (82 aa)) the chain is Cytoplasmic. Low complexity-rich tracts occupy residues 16–29 (SYDS…PSSP) and 42–52 (SPSPSRLESLL). The helical transmembrane segment at 83–103 (LTPVFLWTLALWLIHHFLFPL) threads the bilayer. The Lumenal portion of the chain corresponds to 104 to 864 (SSPFAKLAKP…WDPVKDRYND (761 aa)). N-linked (GlcNAc...) asparagine glycosylation is found at asparagine 200, asparagine 301, and asparagine 583.

The protein belongs to the XPT1 family. The cofactor is Mn(2+).

It localises to the golgi apparatus membrane. It carries out the reaction 3-alpha-D-mannopyranosyl-alpha-D-mannopyranose + UDP-alpha-D-xylose = 3-O-(6-O-alpha-D-xylosylphospho-alpha-D-mannopyranosyl)-alpha-D-mannopyranose + UMP + H(+). In terms of biological role, xylosylphosphotransferase that is specific for UDP-xylose as a donor and mannose as an acceptor to form a xylose-alpha-1-phosphate-6-mannose linkage. Functions in the O-glycosylation of proteins en route through the secretory pathway. The protein is 3-O-alpha-D-mannopyranosyl-alpha-D-mannopyranose xylosylphosphotransferase (XPT1) of Cryptococcus neoformans var. grubii (Filobasidiella neoformans var. grubii).